The following is a 122-amino-acid chain: Holo-[acyl-carrier-protein] synthase (122 aa).

Mg(2+)-binding residues include Asp9 and Glu58.

It belongs to the P-Pant transferase superfamily. AcpS family. It depends on Mg(2+) as a cofactor.

The protein localises to the cytoplasm. It catalyses the reaction apo-[ACP] + CoA = holo-[ACP] + adenosine 3',5'-bisphosphate + H(+). Functionally, transfers the 4'-phosphopantetheine moiety from coenzyme A to a Ser of acyl-carrier-protein. In Chlamydia caviae (strain ATCC VR-813 / DSM 19441 / 03DC25 / GPIC) (Chlamydophila caviae), this protein is Holo-[acyl-carrier-protein] synthase.